A 184-amino-acid polypeptide reads, in one-letter code: UPF0397 protein SA2477 (184 aa).

5 consecutive transmembrane segments (helical) span residues 11–31 (VVAI…VVIP), 44–64 (AFLA…TGLV), 77–97 (AWWS…WIGL), 111–131 (MIYF…LIAP), and 148–168 (QGVI…TILL).

The protein belongs to the UPF0397 family.

It is found in the cell membrane. The sequence is that of UPF0397 protein SA2477 from Staphylococcus aureus (strain N315).